The following is a 353-amino-acid chain: Stearoyl-CoA desaturase 4 (353 aa).

The segment at 1-42 is disordered; it reads MTAHLPQEISSRCSTTNIMEPHSRRQQDGEEKMPLQAEDIRP. Residues 1 to 66 lie on the Cytoplasmic side of the membrane; sequence MTAHLPQEIS…EGPPPKLEYV (66 aa). The segment covering 8–18 has biased composition (polar residues); that stretch reads EISSRCSTTNI. A compositionally biased stretch (basic and acidic residues) spans 21 to 42; the sequence is PHSRRQQDGEEKMPLQAEDIRP. A helical membrane pass occupies residues 67 to 87; sequence WRNIIFMALLHVGALYGITLV. Residue Asn-69 coordinates substrate. Residues 88 to 91 are Lumenal-facing; the sequence is PSCK. A helical transmembrane segment spans residues 92-112; sequence VYTWLLGVFYNVVAGLGITAG. Over 113 to 211 the chain is Cytoplasmic; that stretch reads AHRLWSHRTY…EKLVMFQRRY (99 aa). Fe cation contacts are provided by His-114 and His-119. The Histidine box-1 signature appears at 114–119; sequence HRLWSH. 3 residues coordinate substrate: Asn-142, Arg-149, and Asp-150. Positions 151, 154, and 155 each coordinate Fe cation. A Histidine box-2 motif is present at residues 151 to 155; that stretch reads HRAHH. Residues Arg-182 and Lys-183 each contribute to the substrate site. A helical transmembrane segment spans residues 212 to 231; that stretch reads YKLAVTLMFIILPTLVPWYL. Topologically, residues 232 to 235 are lumenal; that stretch reads WGET. Residues 236 to 257 form a helical membrane-spanning segment; the sequence is FQHSLCVSNFLRYAVLLNFTWL. Trp-256 provides a ligand contact to substrate. Topologically, residues 258–353 are cytoplasmic; sequence VNSAAHLYGY…RTGDGSHKSS (96 aa). The Fe cation site is built by His-263, His-292, His-295, and His-296. The Histidine box-3 signature appears at 292–296; sequence HNYHH.

This sequence belongs to the fatty acid desaturase type 1 family. The cofactor is Fe(2+). Detected in heart, but not in brain, liver, skin or adipose tissue.

It localises to the endoplasmic reticulum membrane. Its subcellular location is the microsome membrane. The enzyme catalyses octadecanoyl-CoA + 2 Fe(II)-[cytochrome b5] + O2 + 2 H(+) = (9Z)-octadecenoyl-CoA + 2 Fe(III)-[cytochrome b5] + 2 H2O. It catalyses the reaction hexadecanoyl-CoA + 2 Fe(II)-[cytochrome b5] + O2 + 2 H(+) = (9Z)-hexadecenoyl-CoA + 2 Fe(III)-[cytochrome b5] + 2 H2O. Functionally, stearoyl-CoA desaturase that utilizes O(2) and electrons from reduced cytochrome b5 to introduce the first double bond into saturated fatty acyl-CoA substrates. Catalyzes the insertion of a cis double bond at the delta-9 position into fatty acyl-CoA substrates including palmitoyl-CoA and stearoyl-CoA. Required for the biosynthesis of membrane phospholipids, cholesterol esters and triglycerides. This is Stearoyl-CoA desaturase 4 from Mus musculus (Mouse).